A 957-amino-acid polypeptide reads, in one-letter code: Melanoma-associated antigen E1 (957 aa).

The interval 1 to 433 (MSLVSQNSRR…RNPSKCSIVL (433 aa)) is disordered. Composition is skewed to polar residues over residues 85 to 96 (SEASSASGQPTV) and 104 to 130 (LLAT…SVTL). Residues 138–156 (TSRPPTSSEEPSTSVPATP) are compositionally biased toward low complexity. Polar residues-rich tracts occupy residues 158-177 (EGTS…TSVV), 220-232 (LSTS…TEGL), 256-306 (RSTT…GPST), 328-344 (LSTS…STSV), 364-380 (RSTS…DTSV), and 414-428 (TLFS…NPSK). 2 MAGE domains span residues 491–690 (MEQN…YNEA) and 745–936 (LESK…YREA). Positions 743 to 957 (SRLESKARKL…HRQFFVHNFR (215 aa)) are interaction with DTNA.

Interacts with DTNA. Interacts with TRIM28.

The protein resides in the cytoplasm. It is found in the perinuclear region. The protein localises to the nucleus. Its subcellular location is the cell membrane. May enhance ubiquitin ligase activity of RING-type zinc finger-containing E3 ubiquitin-protein ligases. Proposed to act through recruitment and/or stabilization of the Ubl-conjugating enzyme (E2) at the E3:substrate complex. The protein is Melanoma-associated antigen E1 (MAGEE1) of Macaca fascicularis (Crab-eating macaque).